The chain runs to 1463 residues: DNA polymerase III PolC-type (1463 aa).

Residues 425-581 (YVVFDVETTG…YDAEATGRLL (157 aa)) form the Exonuclease domain.

This sequence belongs to the DNA polymerase type-C family. PolC subfamily.

The protein localises to the cytoplasm. It catalyses the reaction DNA(n) + a 2'-deoxyribonucleoside 5'-triphosphate = DNA(n+1) + diphosphate. Functionally, required for replicative DNA synthesis. This DNA polymerase also exhibits 3' to 5' exonuclease activity. The sequence is that of DNA polymerase III PolC-type from Streptococcus pneumoniae serotype 2 (strain D39 / NCTC 7466).